Here is a 37-residue protein sequence, read N- to C-terminus: U1-ectatotoxin-Eb1a subunit B (37 aa).

Belongs to the ectatomin family. Ectatomin-Eq subfamily. Heterodimer of subunits A and B; disulfide-linked. In terms of tissue distribution, expressed by the venom gland.

The protein localises to the secreted. It is found in the target cell membrane. This is U1-ectatotoxin-Eb1a subunit B from Ectatomma brunneum (Ant).